Here is a 1294-residue protein sequence, read N- to C-terminus: Unconventional myosin-VI (1294 aa).

Residues 2 to 53 (EDGKPVWAPHPTDGFQMGNIVDIGPDSLTIEPLNQKGKTFLALINQVFPAEE) enclose the Myosin N-terminal SH3-like domain. One can recognise a Myosin motor domain in the interval 57 to 771 (KDVEDNCSLM…KFAEFDQIMK (715 aa)). Position 151–158 (151–158 (GESGAGKT)) interacts with ATP. S267 carries the post-translational modification Phosphoserine. The interval 273-317 (YLNRGCTRYFANKETDKQILQNRKSPEYLKAGSMKDPLLDDHGDF) is responsible for slow ATPase activity. At T405 the chain carries Phosphothreonine. At S604 the chain carries Phosphoserine. Positions 665-672 (FIRCIKPN) are actin-binding. Residues 782–810 (KRVNHWLTCSRWKKVQWCSLSVIKLKNKI) form a required for binding calmodulin region. The IQ domain occupies 814-834 (AEACIKMQKTIRMWLCKRRHK). The interval 835–916 (PRIDGLVKVG…EELLSALQKK (82 aa)) is three-helix bundle. The SAH stretch occupies residues 917–984 (KQQEEEAERL…EDDEKRIQAE (68 aa)). Residues 934–955 (EKERKRREEDEKRRRKEEEERR) are disordered. The residue at position 1025 (S1025) is a Phosphoserine. Residues 1060–1285 (KEMSEFLSRG…ESRQARPTYA (226 aa)) are interaction with TAX1BP1 and CALCOCO2/NDP52. The interval 1116–1118 (RRL) is interaction with OPTN. S1155 bears the Phosphoserine mark. The interaction with TOM1 stretch occupies residues 1157–1285 (QQNPAAQIPA…ESRQARPTYA (129 aa)).

This sequence belongs to the TRAFAC class myosin-kinesin ATPase superfamily. Myosin family. As to quaternary structure, homodimer; dimerization seems to implicate the unfolding of the three-helix bundle region creating an additional calmodulin binding site, and cargo binding. Able to function as a monomer under specific conditions in vitro. Forms a complex with CFTR and DAB2 in the apical membrane of epithelial cells. Component of the DISP/DOCK7-induced septin displacement complex, at least composed of DOCK7, LRCH3 and MYO6. Binding to calmodulin through a unique insert, not found in other myosins, located in the neck region between the motor domain and the IQ domain appears to contribute to the directionality reversal. This interaction occurs only if the C-terminal lobe of calmodulin is occupied by calcium. Interaction with F-actin/ACTN1 occurs only at the apical brush border domain of the proximal tubule cells. Interacts with DAB2. In vitro, the C-terminal globular tail binds a C-terminal region of DAB2. Interacts with CFTR. Interacts with CABP5. Interacts with TOM1. Interacts with OPTN. Interacts with TAX1BP1 and CALCOCO2/NDP52. Interacts with TOM1L2. Interacts with CLIC5; may work together in a complex which also includes RDX and MYO6 to stabilize linkages between the plasma membrane and subjacent actin cytoskeleton at the base of stereocilia. Phosphorylation in the motor domain, induced by EGF, results in translocation of MYO6 from the cell surface to membrane ruffles and affects F-actin dynamics. Phosphorylated in vitro by p21-activated kinase (PAK). As to expression, expressed in most tissues examined including heart, brain, placenta, pancreas, spleen, thymus, prostate, testis, ovary, small intestine and colon. Highest levels in brain, pancreas, testis and small intestine. Also expressed in fetal brain and cochlea. Isoform 1 and isoform 2, containing the small insert, and isoform 4, containing neither insert, are expressed in unpolarized epithelial cells.

It is found in the golgi apparatus. The protein localises to the trans-Golgi network membrane. Its subcellular location is the nucleus. It localises to the cytoplasm. The protein resides in the perinuclear region. It is found in the membrane. The protein localises to the clathrin-coated pit. Its subcellular location is the cytoplasmic vesicle. It localises to the clathrin-coated vesicle. The protein resides in the cell projection. It is found in the filopodium. The protein localises to the ruffle membrane. Its subcellular location is the microvillus. It localises to the cytosol. The protein resides in the autophagosome. It is found in the endosome. The protein localises to the clathrin-coated vesicle membrane. Its function is as follows. Myosins are actin-based motor molecules with ATPase activity. Unconventional myosins serve in intracellular movements. Myosin 6 is a reverse-direction motor protein that moves towards the minus-end of actin filaments. Has slow rate of actin-activated ADP release due to weak ATP binding. Functions in a variety of intracellular processes such as vesicular membrane trafficking and cell migration. Required for the structural integrity of the Golgi apparatus via the p53-dependent pro-survival pathway. Appears to be involved in a very early step of clathrin-mediated endocytosis in polarized epithelial cells. Together with TOM1, mediates delivery of endocytic cargo to autophagosomes thereby promoting autophagosome maturation and driving fusion with lysosomes. Links TOM1 with autophagy receptors, such as TAX1BP1; CALCOCO2/NDP52 and OPTN. May act as a regulator of F-actin dynamics. As part of the DISP complex, may regulate the association of septins with actin and thereby regulate the actin cytoskeleton. May play a role in transporting DAB2 from the plasma membrane to specific cellular targets. May play a role in the extension and network organization of neurites. Required for structural integrity of inner ear hair cells. Required for the correct localization of CLIC5 and RDX at the stereocilium base. Modulates RNA polymerase II-dependent transcription. The protein is Unconventional myosin-VI of Homo sapiens (Human).